The primary structure comprises 452 residues: Probable phosphoglucosamine mutase (452 aa).

Catalysis depends on serine 101, which acts as the Phosphoserine intermediate. The Mg(2+) site is built by serine 101, aspartate 242, aspartate 244, and aspartate 246. Phosphoserine is present on serine 101.

The protein belongs to the phosphohexose mutase family. The cofactor is Mg(2+). Activated by phosphorylation.

It carries out the reaction alpha-D-glucosamine 1-phosphate = D-glucosamine 6-phosphate. Its function is as follows. Catalyzes the conversion of glucosamine-6-phosphate to glucosamine-1-phosphate. This chain is Probable phosphoglucosamine mutase, found in Methanosphaera stadtmanae (strain ATCC 43021 / DSM 3091 / JCM 11832 / MCB-3).